Consider the following 281-residue polypeptide: 4-hydroxy-3-methylbut-2-enyl diphosphate reductase (281 aa).

Position 12 (cysteine 12) interacts with [4Fe-4S] cluster. Histidine 41 and histidine 74 together coordinate (2E)-4-hydroxy-3-methylbut-2-enyl diphosphate. Residues histidine 41 and histidine 74 each contribute to the dimethylallyl diphosphate site. Isopentenyl diphosphate-binding residues include histidine 41 and histidine 74. Position 96 (cysteine 96) interacts with [4Fe-4S] cluster. A (2E)-4-hydroxy-3-methylbut-2-enyl diphosphate-binding site is contributed by histidine 124. Histidine 124 is a dimethylallyl diphosphate binding site. Histidine 124 provides a ligand contact to isopentenyl diphosphate. The active-site Proton donor is glutamate 126. Threonine 164 serves as a coordination point for (2E)-4-hydroxy-3-methylbut-2-enyl diphosphate. Cysteine 193 contributes to the [4Fe-4S] cluster binding site. Serine 221, asparagine 223, and serine 265 together coordinate (2E)-4-hydroxy-3-methylbut-2-enyl diphosphate. Serine 221, asparagine 223, and serine 265 together coordinate dimethylallyl diphosphate. Isopentenyl diphosphate-binding residues include serine 221, asparagine 223, and serine 265.

The protein belongs to the IspH family. [4Fe-4S] cluster is required as a cofactor.

It carries out the reaction isopentenyl diphosphate + 2 oxidized [2Fe-2S]-[ferredoxin] + H2O = (2E)-4-hydroxy-3-methylbut-2-enyl diphosphate + 2 reduced [2Fe-2S]-[ferredoxin] + 2 H(+). It catalyses the reaction dimethylallyl diphosphate + 2 oxidized [2Fe-2S]-[ferredoxin] + H2O = (2E)-4-hydroxy-3-methylbut-2-enyl diphosphate + 2 reduced [2Fe-2S]-[ferredoxin] + 2 H(+). Its pathway is isoprenoid biosynthesis; dimethylallyl diphosphate biosynthesis; dimethylallyl diphosphate from (2E)-4-hydroxy-3-methylbutenyl diphosphate: step 1/1. It functions in the pathway isoprenoid biosynthesis; isopentenyl diphosphate biosynthesis via DXP pathway; isopentenyl diphosphate from 1-deoxy-D-xylulose 5-phosphate: step 6/6. Its function is as follows. Catalyzes the conversion of 1-hydroxy-2-methyl-2-(E)-butenyl 4-diphosphate (HMBPP) into a mixture of isopentenyl diphosphate (IPP) and dimethylallyl diphosphate (DMAPP). Acts in the terminal step of the DOXP/MEP pathway for isoprenoid precursor biosynthesis. The chain is 4-hydroxy-3-methylbut-2-enyl diphosphate reductase from Nitratidesulfovibrio vulgaris (strain DSM 19637 / Miyazaki F) (Desulfovibrio vulgaris).